The primary structure comprises 417 residues: Phosphoglycerate kinase 2 (417 aa).

Position 2 is an N-acetylserine (Ser2). Ser2 and Ser4 each carry phosphoserine. Lys11 carries the post-translational modification N6-acetyllysine. (2R)-3-phosphoglycerate-binding residues include Val23, Asp24, Phe25, Asn26, Gln38, Arg39, Ser62, His63, Gly65, and Arg66. N6-acetyllysine is present on residues Lys75, Lys86, and Lys97. 2 residues coordinate (2R)-3-phosphoglycerate: Leu122 and Arg123. An N6-acetyllysine mark is found at Lys131 and Lys146. His170 and Arg171 together coordinate (2R)-3-phosphoglycerate. Position 196 is a phosphotyrosine (Tyr196). Lys199 carries the N6-acetyllysine modification. An ADP-binding site is contributed by Gly214. Gly214 serves as a coordination point for CDP. AMP contacts are provided by Ala215 and Lys216. An ATP-binding site is contributed by Ala215. Ala215 provides a ligand contact to Mg(2+). Mg(2+) is bound by residues Ala218 and Asp219. Asp219 serves as a coordination point for CDP. Residue Lys220 coordinates AMP. Position 220 (Lys220) interacts with ATP. Gly238 provides a ligand contact to ADP. Residue Gly238 participates in CDP binding. Position 239 (Gly239) interacts with AMP. Gly239 serves as a coordination point for ATP. 2 positions are modified to N6-acetyllysine: Lys267 and Lys291. Residue Ala313 coordinates AMP. Residue Ala313 participates in ATP binding. The CDP site is built by Gly338 and Phe343. ADP is bound at residue Phe343. Glu344 contacts AMP. ATP-binding residues include Glu344, Asp375, and Thr376. Residue Asp375 participates in Mg(2+) binding.

Belongs to the phosphoglycerate kinase family. As to quaternary structure, monomer. The cofactor is Mg(2+). As to expression, testis specific.

It is found in the cytoplasm. The enzyme catalyses (2R)-3-phosphoglycerate + ATP = (2R)-3-phospho-glyceroyl phosphate + ADP. The protein operates within carbohydrate degradation; glycolysis; pyruvate from D-glyceraldehyde 3-phosphate: step 2/5. Essential for sperm motility and male fertility but is not required for the completion of spermatogenesis. The chain is Phosphoglycerate kinase 2 from Sus scrofa (Pig).